The chain runs to 91 residues: Progonadoliberin-1 (91 aa).

An N-terminal signal peptide occupies residues 1–21 (MVVKTWMPWLLVSSVLSQGCC). The residue at position 22 (Gln22) is a Pyrrolidone carboxylic acid. Position 31 is a glycine amide (Gly31).

The protein belongs to the GnRH family. In terms of tissue distribution, expressed in the cell bodies of a cluster of neurons in the preoptic region.

It is found in the secreted. Stimulates the secretion of gonadotropins. This is Progonadoliberin-1 (gnrh1) from Oryzias latipes (Japanese rice fish).